A 332-amino-acid polypeptide reads, in one-letter code: Alanine racemase (332 aa).

Lys-33 functions as the Proton acceptor; specific for D-alanine in the catalytic mechanism. The residue at position 33 (Lys-33) is an N6-(pyridoxal phosphate)lysine. Position 115 (Arg-115) interacts with substrate. The Proton acceptor; specific for L-alanine role is filled by Tyr-245. Met-286 is a binding site for substrate.

It belongs to the alanine racemase family. Pyridoxal 5'-phosphate is required as a cofactor.

It carries out the reaction L-alanine = D-alanine. Its pathway is amino-acid biosynthesis; D-alanine biosynthesis; D-alanine from L-alanine: step 1/1. Catalyzes the interconversion of L-alanine and D-alanine. May also act on other amino acids. The sequence is that of Alanine racemase (alr) from Nitratiruptor sp. (strain SB155-2).